Here is a 276-residue protein sequence, read N- to C-terminus: Casein kinase II subunit beta-3 (276 aa).

Disordered regions lie at residues 1–22 (MYKE…LGGA) and 34–86 (KKLE…SEGD).

Belongs to the casein kinase 2 subunit beta family. As to quaternary structure, heterotetramer of two catalytic alpha subunits and two regulatory beta subunits. Interacts with CCA1. Interacts with LHY. Phosphorylated by alpha subunit.

It localises to the cytoplasm. The protein localises to the cytosol. Its subcellular location is the nucleus. In terms of biological role, plays a complex role in regulating the basal catalytic activity of the alpha subunit. The tetrameric holoenzyme CK2, composed of two alpha and two beta subunits, phosphorylates the transcription factor PIF1 after an exposure to light, resulting in a proteasome-dependent degradation of PIF1 and promotion of photomorphogenesis. CK2 phosphorylates translation initiation factors. May participate in the regulation of the initiation of translation. Stimulates the binding of CCA1 to promoters. The protein is Casein kinase II subunit beta-3 (CKB3) of Arabidopsis thaliana (Mouse-ear cress).